The chain runs to 220 residues: NADH-quinone oxidoreductase subunit I (220 aa).

2 4Fe-4S ferredoxin-type domains span residues 71-102 (LQRL…IITH) and 112-141 (DSYT…MGNR). Residues Cys82, Cys85, Cys88, Cys92, Cys121, Cys124, Cys127, and Cys131 each coordinate [4Fe-4S] cluster. The disordered stretch occupies residues 187 to 220 (MQATPLDYVQEPSKEESQEETPTNPESNKGDENV).

This sequence belongs to the complex I 23 kDa subunit family. NDH-1 is composed of 14 different subunits. Subunits NuoA, H, J, K, L, M, N constitute the membrane sector of the complex. [4Fe-4S] cluster serves as cofactor.

It localises to the cell inner membrane. The enzyme catalyses a quinone + NADH + 5 H(+)(in) = a quinol + NAD(+) + 4 H(+)(out). NDH-1 shuttles electrons from NADH, via FMN and iron-sulfur (Fe-S) centers, to quinones in the respiratory chain. The immediate electron acceptor for the enzyme in this species is believed to be ubiquinone. Couples the redox reaction to proton translocation (for every two electrons transferred, four hydrogen ions are translocated across the cytoplasmic membrane), and thus conserves the redox energy in a proton gradient. This Helicobacter pylori (strain ATCC 700392 / 26695) (Campylobacter pylori) protein is NADH-quinone oxidoreductase subunit I.